Reading from the N-terminus, the 162-residue chain is NADH-quinone oxidoreductase subunit I (162 aa).

4Fe-4S ferredoxin-type domains lie at 52–82 (LRRY…IEAG) and 93–122 (TRYD…EGPN). [4Fe-4S] cluster-binding residues include cysteine 62, cysteine 65, cysteine 68, cysteine 72, cysteine 102, cysteine 105, cysteine 108, and cysteine 112.

This sequence belongs to the complex I 23 kDa subunit family. As to quaternary structure, NDH-1 is composed of 14 different subunits. Subunits NuoA, H, J, K, L, M, N constitute the membrane sector of the complex. Requires [4Fe-4S] cluster as cofactor.

The protein resides in the cell inner membrane. It catalyses the reaction a quinone + NADH + 5 H(+)(in) = a quinol + NAD(+) + 4 H(+)(out). NDH-1 shuttles electrons from NADH, via FMN and iron-sulfur (Fe-S) centers, to quinones in the respiratory chain. The immediate electron acceptor for the enzyme in this species is believed to be ubiquinone. Couples the redox reaction to proton translocation (for every two electrons transferred, four hydrogen ions are translocated across the cytoplasmic membrane), and thus conserves the redox energy in a proton gradient. This is NADH-quinone oxidoreductase subunit I from Methylorubrum populi (strain ATCC BAA-705 / NCIMB 13946 / BJ001) (Methylobacterium populi).